Consider the following 198-residue polypeptide: V-type proton ATPase subunit E (198 aa).

This sequence belongs to the V-ATPase E subunit family.

Produces ATP from ADP in the presence of a proton gradient across the membrane. The protein is V-type proton ATPase subunit E of Borrelia hermsii (strain HS1 / DAH).